Reading from the N-terminus, the 70-residue chain is Large ribosomal subunit protein uL29 (70 aa).

Belongs to the universal ribosomal protein uL29 family.

This chain is Large ribosomal subunit protein uL29, found in Prochlorococcus marinus (strain NATL1A).